Here is a 146-residue protein sequence, read N- to C-terminus: D-aminoacyl-tRNA deacylase (146 aa).

A Gly-cisPro motif, important for rejection of L-amino acids motif is present at residues 137–138 (GP).

It belongs to the DTD family. Homodimer.

The protein localises to the cytoplasm. It carries out the reaction glycyl-tRNA(Ala) + H2O = tRNA(Ala) + glycine + H(+). The catalysed reaction is a D-aminoacyl-tRNA + H2O = a tRNA + a D-alpha-amino acid + H(+). In terms of biological role, an aminoacyl-tRNA editing enzyme that deacylates mischarged D-aminoacyl-tRNAs. Also deacylates mischarged glycyl-tRNA(Ala), protecting cells against glycine mischarging by AlaRS. Acts via tRNA-based rather than protein-based catalysis; rejects L-amino acids rather than detecting D-amino acids in the active site. By recycling D-aminoacyl-tRNA to D-amino acids and free tRNA molecules, this enzyme counteracts the toxicity associated with the formation of D-aminoacyl-tRNA entities in vivo and helps enforce protein L-homochirality. The protein is D-aminoacyl-tRNA deacylase of Variovorax paradoxus (strain S110).